The primary structure comprises 230 residues: Small ribosomal subunit protein uS2 (230 aa).

The protein belongs to the universal ribosomal protein uS2 family.

This is Small ribosomal subunit protein uS2 from Prochlorococcus marinus (strain NATL2A).